Here is a 193-residue protein sequence, read N- to C-terminus: Ubiquitin-conjugating enzyme E2 E1 (193 aa).

Residues 1–45 (MSDDDSRASTSSSSSSSSNQQTEKETNTPKKKESKVSMSKNSKLL) are disordered. S2 carries the post-translational modification N-acetylserine. Residues 8 to 18 (ASTSSSSSSSS) are compositionally biased toward low complexity. Basic and acidic residues predominate over residues 22–35 (TEKETNTPKKKESK). Over residues 36-45 (VSMSKNSKLL) the composition is skewed to polar residues. The 147-residue stretch at 47–193 (TSAKRIQKEL…ARQWTKRYAT (147 aa)) folds into the UBC core domain. Catalysis depends on C131, which acts as the Glycyl thioester intermediate. A Glycyl lysine isopeptide (Lys-Gly) (interchain with G-Cter in ISG15) cross-link involves residue K136.

The protein belongs to the ubiquitin-conjugating enzyme family. In terms of assembly, interacts with RNF14. Post-translationally, ISGylation suppresses ubiquitin E2 enzyme activity. Autoubiquitinated in vitro.

The protein resides in the nucleus. It catalyses the reaction S-ubiquitinyl-[E1 ubiquitin-activating enzyme]-L-cysteine + [E2 ubiquitin-conjugating enzyme]-L-cysteine = [E1 ubiquitin-activating enzyme]-L-cysteine + S-ubiquitinyl-[E2 ubiquitin-conjugating enzyme]-L-cysteine.. It carries out the reaction S-ubiquitinyl-[E1 ubiquitin-activating enzyme]-L-cysteine + [acceptor protein]-L-lysine = [E1 ubiquitin-activating enzyme]-L-cysteine + N(6)-monoubiquitinyl-[acceptor protein]-L-lysine.. The protein operates within protein modification; protein ubiquitination. Accepts ubiquitin from the E1 complex and catalyzes its covalent attachment to other proteins. Catalyzes the covalent attachment of ISG15 to other proteins. Mediates the selective degradation of short-lived and abnormal proteins. In vitro also catalyzes 'Lys-48'-linked polyubiquitination. Catalyzes monoubiquitination of other proteins in both an E3-dependent and E3-independent manner. In Homo sapiens (Human), this protein is Ubiquitin-conjugating enzyme E2 E1.